We begin with the raw amino-acid sequence, 573 residues long: 3-oxosteroid 1-dehydrogenase (573 aa).

7-36 (DLIVVGSGAGACWAPIRAQEQGLKTLVVEK) provides a ligand contact to FAD.

This sequence belongs to the FAD-dependent oxidoreductase 2 family. 3-oxosteroid dehydrogenase subfamily. FAD is required as a cofactor.

It is found in the cell inner membrane. The catalysed reaction is a 3-oxosteroid + A = a 3-oxo-Delta(1)-steroid + AH2. Its pathway is lipid metabolism; steroid degradation. Functionally, dehydrogenates steroids by introducing a double bond in steroid ring A. This chain is 3-oxosteroid 1-dehydrogenase, found in Comamonas testosteroni (Pseudomonas testosteroni).